Consider the following 327-residue polypeptide: Phosphate acyltransferase (327 aa).

The protein belongs to the PlsX family. In terms of assembly, homodimer. Probably interacts with PlsY.

The protein localises to the cytoplasm. It catalyses the reaction a fatty acyl-[ACP] + phosphate = an acyl phosphate + holo-[ACP]. It participates in lipid metabolism; phospholipid metabolism. Catalyzes the reversible formation of acyl-phosphate (acyl-PO(4)) from acyl-[acyl-carrier-protein] (acyl-ACP). This enzyme utilizes acyl-ACP as fatty acyl donor, but not acyl-CoA. The protein is Phosphate acyltransferase of Thermotoga neapolitana (strain ATCC 49049 / DSM 4359 / NBRC 107923 / NS-E).